A 1044-amino-acid polypeptide reads, in one-letter code: MELAVGASEATMRSLLGKLGNLLAQEYSLVSGVRGDIQYINDELASMQAFLRDLSVVTEGHNHDNRRKDWMKQIRDVAYDVEDCIDDFAHRLPQDSISDAKCSFILTKMYELLTWWPRRDIASRIAELKVRAQQIADRRNRYGVNNPEHCDSSNSPRPRAHAAAQDIAEYQDTKPQIVSIKEPVGMKTVMENLEKWLTEPQPDKGRAVLSIVGFGGVGKTTIAMALYRKVSGKFDCQASVAVSQNYDEDEVLRSILNQVSKQEEAGGSTESSSRDENTREPQGSSSTSSREENTAESGTKRMLNKLKKALPLSLLGGNDDKTSVRQQETMGSLQLREELKRRLAEKRYILLIDDIWSAKTWNSIIIPFLPSENDKDSRIIVTTRFHAVGSTCSPRHKNDEATSSPGHGKDLLHKVDFLTGDKPLDLFNASIPDPMKRTDRDKKLSKICGGLPLAIVTMAGLVACNPNKANSDWSKLCESLFPYPVTTLNLDGVTRILDCCYNDLPADLKTCLLYLSIFPKGWKISRKRLARRWIAEGFATEKQGLTEEEVAEAYFNQLARRNLIRPVEHGSNGKVKAFQVHDMVLEYIMSKSIEENFITVVGGHWQMTAPSNKVRRLSLQSSGSKHGNSTKGLNLAQVRSLTVFGNLNHVPFHSFNYGIIQVLDLEGWKGLKERHVTEICQMLVLKYLSIRRTEIAKIPSKIEKLEYLETLDIRETYVEELPKSVGQLKRISSILGGNKNTRKGLRLPQEKRNKAMKNPSPQGKTKEPAEKGFLSQEKAKGTMKSLRVLSGIEIVDESAAVAASLHQLTGLRKLAIYKLKISEENDTFKELLSSIEYLGSCGLQTLAINDENSKFINSLYNMSAPPRYLVSLELSGKLKWLPEWITSITTLNKLTISITVLTTETLEILRNLPSLFSLTFAFSLSAAKQDQDTVKGILEDNKLATDGEIVIPAKEFKSLKLLRFFAPFVPKLSFPDKSAMPALEIIEMRFQEFEGLFGIEILENLREVHLKVSDGAEAITKFLVSDLKDNTEKPKVFVDGIVTA.

Residues 3–184 (LAVGASEATM…PQIVSIKEPV (182 aa)) are structured coiled coil (CC) domain. Residues 187–543 (KTVMENLEKW…IAEGFATEKQ (357 aa)) enclose the NB-ARC domain. Positions 258–302 (QVSKQEEAGGSTESSSRDENTREPQGSSSTSSREENTAESGTKRM) are disordered. 3 LRR repeats span residues 635–657 (LAQVRSLTVFGNLNHVPFHSFNY), 682–705 (MLVLKYLSIRRTEIAKIPSKIEKL), and 706–728 (EYLETLDIRETYVEELPKSVGQL). The segment at 737 to 771 (GNKNTRKGLRLPQEKRNKAMKNPSPQGKTKEPAEK) is disordered. LRR repeat units lie at residues 808–834 (LTGLRKLAIYKLKISEENDTFKELLSS), 840–862 (SCGLQTLAINDENSKFINSLYNM), 866–888 (PRYLVSLELSGKLKWLPEWITSI), 889–911 (TTLNKLTISITVLTTETLEILRN), 935–958 (KGILEDNKLATDGEIVIPAKEFKS), and 980–1004 (MPALEIIEMRFQEFEGLFGIEILEN).

The protein belongs to the disease resistance NB-LRR family.

Its function is as follows. Probable disease resistance protein. Resistance proteins guard the plant against pathogens that contain an appropriate avirulence protein via an indirect interaction with this avirulence protein. That triggers a defense system including the hypersensitive response, which restricts the pathogen growth. At the opposite of cultivar Kusabue, the cultivar Nipponbare doesn't recognize the effector avirulence protein AVR-Pik from M.oryzae. This Oryza sativa subsp. japonica (Rice) protein is Disease resistance protein PIK6-NP.